A 107-amino-acid polypeptide reads, in one-letter code: UPF0145 protein BT_3410 (107 aa).

It belongs to the UPF0145 family.

The chain is UPF0145 protein BT_3410 from Bacteroides thetaiotaomicron (strain ATCC 29148 / DSM 2079 / JCM 5827 / CCUG 10774 / NCTC 10582 / VPI-5482 / E50).